Consider the following 267-residue polypeptide: Dihydropteroate synthase (267 aa).

A Pterin-binding domain is found at 1–251 (MTKTKIIGIL…NVDLNVKLAQ (251 aa)). N11 provides a ligand contact to Mg(2+). (7,8-dihydropterin-6-yl)methyl diphosphate-binding positions include T51, D84, N103, D167, K203, and 239–241 (RVH).

It belongs to the DHPS family. Mg(2+) serves as cofactor.

The catalysed reaction is (7,8-dihydropterin-6-yl)methyl diphosphate + 4-aminobenzoate = 7,8-dihydropteroate + diphosphate. Its pathway is cofactor biosynthesis; tetrahydrofolate biosynthesis; 7,8-dihydrofolate from 2-amino-4-hydroxy-6-hydroxymethyl-7,8-dihydropteridine diphosphate and 4-aminobenzoate: step 1/2. Its function is as follows. Catalyzes the condensation of para-aminobenzoate (pABA) with 6-hydroxymethyl-7,8-dihydropterin diphosphate (DHPt-PP) to form 7,8-dihydropteroate (H2Pte), the immediate precursor of folate derivatives. In Staphylococcus haemolyticus, this protein is Dihydropteroate synthase (folP).